A 312-amino-acid polypeptide reads, in one-letter code: Adenylyl-sulfate kinase, chloroplastic (312 aa).

142 to 149 is an ATP binding site; that stretch reads GLSGSGKS. The active-site Phosphoserine intermediate is the S216.

The protein belongs to the APS kinase family.

The protein localises to the plastid. Its subcellular location is the chloroplast. The enzyme catalyses adenosine 5'-phosphosulfate + ATP = 3'-phosphoadenylyl sulfate + ADP + H(+). The protein operates within sulfur metabolism; hydrogen sulfide biosynthesis; sulfite from sulfate: step 2/3. In terms of biological role, catalyzes the synthesis of activated sulfate. The polypeptide is Adenylyl-sulfate kinase, chloroplastic (AKN) (Catharanthus roseus (Madagascar periwinkle)).